The following is a 352-amino-acid chain: Holliday junction branch migration complex subunit RuvB (352 aa).

The segment at M1 to Y181 is large ATPase domain (RuvB-L). Residues L20, R21, G62, K65, T66, T67, E128 to F130, R171, Y181, and R218 each bind ATP. Residue T66 participates in Mg(2+) binding. The small ATPAse domain (RuvB-S) stretch occupies residues E182–E252. The tract at residues E255–A352 is head domain (RuvB-H). DNA is bound by residues R291, R310, and R315.

It belongs to the RuvB family. In terms of assembly, homohexamer. Forms an RuvA(8)-RuvB(12)-Holliday junction (HJ) complex. HJ DNA is sandwiched between 2 RuvA tetramers; dsDNA enters through RuvA and exits via RuvB. An RuvB hexamer assembles on each DNA strand where it exits the tetramer. Each RuvB hexamer is contacted by two RuvA subunits (via domain III) on 2 adjacent RuvB subunits; this complex drives branch migration. In the full resolvosome a probable DNA-RuvA(4)-RuvB(12)-RuvC(2) complex forms which resolves the HJ.

It is found in the cytoplasm. It carries out the reaction ATP + H2O = ADP + phosphate + H(+). Its function is as follows. The RuvA-RuvB-RuvC complex processes Holliday junction (HJ) DNA during genetic recombination and DNA repair, while the RuvA-RuvB complex plays an important role in the rescue of blocked DNA replication forks via replication fork reversal (RFR). RuvA specifically binds to HJ cruciform DNA, conferring on it an open structure. The RuvB hexamer acts as an ATP-dependent pump, pulling dsDNA into and through the RuvAB complex. RuvB forms 2 homohexamers on either side of HJ DNA bound by 1 or 2 RuvA tetramers; 4 subunits per hexamer contact DNA at a time. Coordinated motions by a converter formed by DNA-disengaged RuvB subunits stimulates ATP hydrolysis and nucleotide exchange. Immobilization of the converter enables RuvB to convert the ATP-contained energy into a lever motion, pulling 2 nucleotides of DNA out of the RuvA tetramer per ATP hydrolyzed, thus driving DNA branch migration. The RuvB motors rotate together with the DNA substrate, which together with the progressing nucleotide cycle form the mechanistic basis for DNA recombination by continuous HJ branch migration. Branch migration allows RuvC to scan DNA until it finds its consensus sequence, where it cleaves and resolves cruciform DNA. The polypeptide is Holliday junction branch migration complex subunit RuvB (Parvibaculum lavamentivorans (strain DS-1 / DSM 13023 / NCIMB 13966)).